The chain runs to 1379 residues: DNA-directed RNA polymerase subunit beta (1379 aa).

It belongs to the RNA polymerase beta chain family. In terms of assembly, the RNAP catalytic core consists of 2 alpha, 1 beta, 1 beta' and 1 omega subunit. When a sigma factor is associated with the core the holoenzyme is formed, which can initiate transcription.

It catalyses the reaction RNA(n) + a ribonucleoside 5'-triphosphate = RNA(n+1) + diphosphate. Its function is as follows. DNA-dependent RNA polymerase catalyzes the transcription of DNA into RNA using the four ribonucleoside triphosphates as substrates. The chain is DNA-directed RNA polymerase subunit beta from Chelativorans sp. (strain BNC1).